A 732-amino-acid polypeptide reads, in one-letter code: S-adenosyl-L-methionine-dependent tRNA 4-demethylwyosine synthase TYW1 (732 aa).

One can recognise a Flavodoxin-like domain in the interval 79-237 (VKIFYGSQTG…DFRAWKTKFI (159 aa)). FMN is bound by residues 85 to 89 (SQTGT) and 176 to 208 (VFGLGNSAYASHFNKVGKNVDKWLWMLGAHRVM). Positions 248–314 (RKKSCGGHCK…HQSLNSIVDV (67 aa)) are disordered. Basic and acidic residues predominate over residues 259–286 (GKCESHQHGSEEREEGSHEQDELHHRDT). Residues 287–301 (EEEEPFESSSEEEFG) show a composition bias toward acidic residues. Residues 400 to 644 (YGIESHRCME…VDLIPEYEIA (245 aa)) form the Radical SAM core domain. C416, C420, and C423 together coordinate [4Fe-4S] cluster.

The protein belongs to the TYW1 family. [4Fe-4S] cluster is required as a cofactor.

The catalysed reaction is N(1)-methylguanosine(37) in tRNA(Phe) + pyruvate + S-adenosyl-L-methionine = 4-demethylwyosine(37) in tRNA(Phe) + 5'-deoxyadenosine + L-methionine + CO2 + H2O. The protein operates within tRNA modification; wybutosine-tRNA(Phe) biosynthesis. Probable component of the wybutosine biosynthesis pathway. Wybutosine is a hyper modified guanosine with a tricyclic base found at the 3'-position adjacent to the anticodon of eukaryotic phenylalanine tRNA. Catalyzes the condensation of N-methylguanine with 2 carbon atoms from pyruvate to form the tricyclic 4-demethylwyosine, an intermediate in wybutosine biosynthesis. This is S-adenosyl-L-methionine-dependent tRNA 4-demethylwyosine synthase TYW1 (TYW1) from Homo sapiens (Human).